The following is a 387-amino-acid chain: Protein kinase gsk3 (387 aa).

A Protein kinase domain is found at 32–316; it reads YTSSKVVGSG…AAEAMCHPFF (285 aa). ATP contacts are provided by residues 38–46 and lysine 61; that span reads VGSGSFGVV. The active-site Proton acceptor is the aspartate 157. Phosphoserine is present on serine 191. At tyrosine 192 the chain carries Phosphotyrosine; by autocatalysis. Serine 335 carries the post-translational modification Phosphoserine.

It belongs to the protein kinase superfamily. CMGC Ser/Thr protein kinase family. GSK-3 subfamily. Autophosphorylated on tyrosine residues.

It localises to the cytoplasm. The protein resides in the nucleus. It catalyses the reaction L-seryl-[protein] + ATP = O-phospho-L-seryl-[protein] + ADP + H(+). The enzyme catalyses L-threonyl-[protein] + ATP = O-phospho-L-threonyl-[protein] + ADP + H(+). Interacts with cdc14 which is thought to play a role in the initiation and completion of mitosis. Involved in the positive regulation of mis12. The polypeptide is Protein kinase gsk3 (gsk3) (Schizosaccharomyces pombe (strain 972 / ATCC 24843) (Fission yeast)).